A 265-amino-acid polypeptide reads, in one-letter code: Isoprenyl transferase 1 (265 aa).

D43 is a catalytic residue. D43 contributes to the Mg(2+) binding site. Substrate is bound by residues 44–47 (GNRR), W48, H61, and 89–91 (STE). Catalysis depends on N92, which acts as the Proton acceptor. Residues R95, R214, and 220–222 (RLS) each bind substrate. E233 lines the Mg(2+) pocket.

Belongs to the UPP synthase family. Homodimer. Requires Mg(2+) as cofactor.

In terms of biological role, catalyzes the condensation of isopentenyl diphosphate (IPP) with allylic pyrophosphates generating different type of terpenoids. This chain is Isoprenyl transferase 1, found in Corynebacterium diphtheriae (strain ATCC 700971 / NCTC 13129 / Biotype gravis).